A 96-amino-acid polypeptide reads, in one-letter code: MTLRPLHDKVILKREEVETRSAGGIVLTGSAATKSTRGKVIAVGTGRLLENGSVQALAVKVGDVVIFNEGYGVKSEKIDGEEVLILSENDILAIVE.

This sequence belongs to the GroES chaperonin family. Heptamer of 7 subunits arranged in a ring. Interacts with the chaperonin GroEL.

Its subcellular location is the cytoplasm. Together with the chaperonin GroEL, plays an essential role in assisting protein folding. The GroEL-GroES system forms a nano-cage that allows encapsulation of the non-native substrate proteins and provides a physical environment optimized to promote and accelerate protein folding. GroES binds to the apical surface of the GroEL ring, thereby capping the opening of the GroEL channel. This chain is Co-chaperonin GroES, found in Actinobacillus pleuropneumoniae serotype 7 (strain AP76).